Consider the following 209-residue polypeptide: Large ribosomal subunit protein uL3 (209 aa).

Residues 126-148 are disordered; sequence HGQSRGPMAHGSRYHRRPGSMGP.

It belongs to the universal ribosomal protein uL3 family. As to quaternary structure, part of the 50S ribosomal subunit. Forms a cluster with proteins L14 and L19.

One of the primary rRNA binding proteins, it binds directly near the 3'-end of the 23S rRNA, where it nucleates assembly of the 50S subunit. In Listeria monocytogenes serotype 4b (strain CLIP80459), this protein is Large ribosomal subunit protein uL3.